Consider the following 81-residue polypeptide: Cytotoxin 1d/1e (81 aa).

The N-terminal stretch at 1 to 21 is a signal peptide; it reads MKTLLLTLVVVTIVCLDLGYT. 4 cysteine pairs are disulfide-bonded: Cys24/Cys42, Cys35/Cys59, Cys63/Cys74, and Cys75/Cys80.

It belongs to the three-finger toxin family. Short-chain subfamily. Type IA cytotoxin sub-subfamily. In terms of assembly, monomer in solution; Homodimer and oligomer in the presence of negatively charged lipids forming a pore with a size ranging between 20 and 30 Angstroms. In terms of tissue distribution, expressed by the venom gland.

Its subcellular location is the secreted. It is found in the target cell membrane. Functionally, shows cytolytic activity on many different cells by forming pore in lipid membranes. In vivo, increases heart rate or kills the animal by cardiac arrest. In addition, it binds to heparin with high affinity, interacts with Kv channel-interacting protein 1 (KCNIP1) in a calcium-independent manner, and binds to integrin alpha-V/beta-3 (ITGAV/ITGB3) with moderate affinity. This chain is Cytotoxin 1d/1e, found in Naja atra (Chinese cobra).